Consider the following 252-residue polypeptide: 2,5-diamino-6-ribosylamino-4(3H)-pyrimidinone 5'-phosphate reductase (252 aa).

NADP(+)-binding positions include T80, D84, V166, and 189–193; that span reads GGIVI.

It belongs to the HTP reductase family. In terms of assembly, homodimer.

It catalyses the reaction 2,5-diamino-6-(1-D-ribitylamino)pyrimidin-4(3H)-one 5'-phosphate + NADP(+) = 2,5-diamino-6-(1-D-ribosylamino)pyrimidin-4(3H)-one 5'-phosphate + NADPH + H(+). The catalysed reaction is 2,5-diamino-6-(1-D-ribitylamino)pyrimidin-4(3H)-one 5'-phosphate + NAD(+) = 2,5-diamino-6-(1-D-ribosylamino)pyrimidin-4(3H)-one 5'-phosphate + NADH + H(+). It participates in cofactor biosynthesis; riboflavin biosynthesis. Its function is as follows. Catalyzes an early step in riboflavin biosynthesis, the NADPH-dependent reduction of the ribose side chain of 2,5-diamino-6-ribosylamino-4(3H)-pyrimidinone 5'-phosphate, yielding 2,5-diamino-6-ribitylamino-4(3H)-pyrimidinone 5'-phosphate. The protein is 2,5-diamino-6-ribosylamino-4(3H)-pyrimidinone 5'-phosphate reductase (RIB7) of Kluyveromyces lactis (strain ATCC 8585 / CBS 2359 / DSM 70799 / NBRC 1267 / NRRL Y-1140 / WM37) (Yeast).